Reading from the N-terminus, the 151-residue chain is Large ribosomal subunit protein bL9 (151 aa).

The protein belongs to the bacterial ribosomal protein bL9 family.

In terms of biological role, binds to the 23S rRNA. In Francisella tularensis subsp. novicida (strain U112), this protein is Large ribosomal subunit protein bL9.